A 1298-amino-acid chain; its full sequence is Histone-lysine N-methyltransferase EHMT1 (1298 aa).

Disordered stretches follow at residues 1–111 (MAAA…HVTA) and 144–192 (ASSL…RKLP). Position 2 is an N-acetylalanine (Ala-2). Lys-22 participates in a covalent cross-link: Glycyl lysine isopeptide (Lys-Gly) (interchain with G-Cter in SUMO1); alternate. A Glycyl lysine isopeptide (Lys-Gly) (interchain with G-Cter in SUMO2); alternate cross-link involves residue Lys-22. Residues 38 to 50 (SAEKQAGEAHMAA) are compositionally biased toward basic and acidic residues. 2 stretches are compositionally biased toward polar residues: residues 54 to 67 (TNGSCENSDASSHA) and 76 to 89 (SARVNPQDGTNTLT). Residues 96-105 (VSERDSEAAK) show a composition bias toward basic and acidic residues. Residues Lys-190, Lys-199, Lys-231, Lys-234, Lys-317, and Lys-327 each participate in a glycyl lysine isopeptide (Lys-Gly) (interchain with G-Cter in SUMO2) cross-link. Positions 211 to 234 (VVGLHAASKDPREVREARDHKEPK) are disordered. The span at 217 to 234 (ASKDPREVREARDHKEPK) shows a compositional bias: basic and acidic residues. Residues 339–479 (VNGESLEMDS…QTAPGDSTGY (141 aa)) are disordered. Residues 344-360 (LEMDSDEDDSEELEEDD) show a composition bias toward acidic residues. Positions 373 to 393 (EDSRTSKESMSEADRAQKMDG) are enriched in basic and acidic residues. Over residues 394–416 (ESEEEQESVDTGEEEEGGDESDL) the composition is skewed to acidic residues. Lys-432 participates in a covalent cross-link: Glycyl lysine isopeptide (Lys-Gly) (interchain with G-Cter in SUMO2). Ser-435 is subject to Phosphoserine. Positions 440 to 452 (PARKRRRRSRKKP) are enriched in basic residues. Positions 460 to 474 (SYKSSAGSAEQTAPG) are enriched in polar residues. Phosphoserine is present on Ser-483. Residues Lys-492, Lys-559, Lys-644, Lys-659, Lys-684, and Lys-731 each participate in a glycyl lysine isopeptide (Lys-Gly) (interchain with G-Cter in SUMO2) cross-link. Residues 644–717 (KADTTSTVTP…TPGLSQGPGK (74 aa)) are disordered. 8 ANK repeats span residues 737-766 (FHPKQLYFSARQGELQKVLLMLVDGIDPNF), 772-801 (NKRSPLHAAAEAGHVDICHMLVQAGANIDT), 805-834 (DQRTPLMEAAENNHLEAVKYLIKAGALVDP), 838-868 (EGSTCLHLAAKKGHYEVVQYLLSNGQMDVNC), 872-901 (GGWTPMIWATEYKHVDLVKLLLSKGSDINI), 905-934 (EENICLHWAAFSGCVDIAEILLAAKCDLHA), 938-967 (HGDSPLHIAARENRYDCVVLFLSRDSDVTL), and 971-1004 (EGETPLQCASLNSQVWSALQMSKALQDSAPDRPS). The segment at 905–907 (EEN) is histone H3K9me binding. Residues Ser-1004 and Ser-1048 each carry the phosphoserine modification. Positions 1060–1123 (QYCVCIDDCS…NCRNRVVQNG (64 aa)) constitute a Pre-SET domain. Positions 1062, 1064, 1068, 1073, 1075, 1105, 1109, 1111, and 1115 each coordinate Zn(2+). One can recognise an SET domain in the interval 1126 to 1243 (ARLQLYRTRD…AGEQLGFDYG (118 aa)). S-adenosyl-L-methionine is bound by residues 1136-1138 (MGW), Tyr-1173, and 1200-1201 (NH). Positions 1162 to 1181 (DSEADVREEDSYLFDLDNKD) are interaction with histone H3. Residue Cys-1203 coordinates Zn(2+). An interaction with histone H3 region spans residues 1242-1245 (YGER). Cys-1256 contacts Zn(2+). Arg-1257 lines the S-adenosyl-L-methionine pocket. 2 residues coordinate Zn(2+): Cys-1258 and Cys-1263. Residues 1274 to 1298 (QASAAQEAQEDGLPDTSSAAAADPL) form a disordered region.

Belongs to the class V-like SAM-binding methyltransferase superfamily. As to quaternary structure, heterodimer; heterodimerizes with EHMT2. Interacts with WIZ and EHMT2. Part of the E2F6.com-1 complex in G0 phase composed of E2F6, MGA, MAX, TFDP1, CBX3, BAT8, EHMT1, RING1, RNF2, MBLR, L3MBTL2 and YAF2. Interacts (via ANK repeats) with RELA (when monomethylated at 'Lys-310'). Interacts with MPHOSPH8. Interacts with CDYL. Interacts with REST only in the presence of CDYL. Part of a complex containing at least CDYL, REST, WIZ, SETB1, EHMT1 and EHMT2. Interacts with BAZ2B. As to expression, widely expressed.

The protein localises to the nucleus. It is found in the chromosome. It carries out the reaction N(6)-methyl-L-lysyl(9)-[histone H3] + S-adenosyl-L-methionine = N(6),N(6)-dimethyl-L-lysyl(9)-[histone H3] + S-adenosyl-L-homocysteine + H(+). The catalysed reaction is L-lysyl(9)-[histone H3] + S-adenosyl-L-methionine = N(6)-methyl-L-lysyl(9)-[histone H3] + S-adenosyl-L-homocysteine + H(+). With respect to regulation, methyltransferase activity is inhibited by BIX-01294. Efficiently inhibited by compound E72, a BIX-01294 derivative in which the diazepane ring and the benzyl are replaced with a 3-dimethylaminopropyl and a 5-aminopentyl group at sites B and C, respectively. In terms of biological role, histone methyltransferase that specifically mono- and dimethylates 'Lys-9' of histone H3 (H3K9me1 and H3K9me2, respectively) in euchromatin. H3K9me represents a specific tag for epigenetic transcriptional repression by recruiting HP1 proteins to methylated histones. Also weakly methylates 'Lys-27' of histone H3 (H3K27me). Also required for DNA methylation, the histone methyltransferase activity is not required for DNA methylation, suggesting that these 2 activities function independently. Probably targeted to histone H3 by different DNA-binding proteins like E2F6, MGA, MAX and/or DP1. During G0 phase, it probably contributes to silencing of MYC- and E2F-responsive genes, suggesting a role in G0/G1 transition in cell cycle. In addition to the histone methyltransferase activity, also methylates non-histone proteins: mediates dimethylation of 'Lys-373' of p53/TP53. Represses the expression of mitochondrial function-related genes, perhaps by occupying their promoter regions, working in concert with probable chromatin reader BAZ2B. The protein is Histone-lysine N-methyltransferase EHMT1 (EHMT1) of Homo sapiens (Human).